Consider the following 117-residue polypeptide: Large ribosomal subunit protein bL20c (117 aa).

Belongs to the bacterial ribosomal protein bL20 family.

The protein resides in the plastid. Its subcellular location is the chloroplast. In terms of biological role, binds directly to 23S ribosomal RNA and is necessary for the in vitro assembly process of the 50S ribosomal subunit. It is not involved in the protein synthesizing functions of that subunit. The protein is Large ribosomal subunit protein bL20c of Drimys granadensis.